The primary structure comprises 242 residues: Ethanolamine ammonia-lyase small subunit (242 aa).

Positions 155 and 176 each coordinate adenosylcob(III)alamin.

The protein belongs to the EutC family. In terms of assembly, the basic unit is a heterodimer which dimerizes to form tetramers. The heterotetramers trimerize; 6 large subunits form a core ring with 6 small subunits projecting outwards. Adenosylcob(III)alamin serves as cofactor.

Its subcellular location is the bacterial microcompartment. It carries out the reaction ethanolamine = acetaldehyde + NH4(+). The protein operates within amine and polyamine degradation; ethanolamine degradation. Functionally, catalyzes the deamination of various vicinal amino-alcohols to oxo compounds. Allows this organism to utilize ethanolamine as the sole source of nitrogen and carbon in the presence of external vitamin B12. This is Ethanolamine ammonia-lyase small subunit from Clostridium acetobutylicum (strain ATCC 824 / DSM 792 / JCM 1419 / IAM 19013 / LMG 5710 / NBRC 13948 / NRRL B-527 / VKM B-1787 / 2291 / W).